A 393-amino-acid polypeptide reads, in one-letter code: tRNA(Met) cytidine acetate ligase (393 aa).

Residues G81, N142, and R167 each coordinate ATP.

The protein belongs to the TmcAL family.

The protein localises to the cytoplasm. The enzyme catalyses cytidine(34) in elongator tRNA(Met) + acetate + ATP = N(4)-acetylcytidine(34) in elongator tRNA(Met) + AMP + diphosphate. Catalyzes the formation of N(4)-acetylcytidine (ac(4)C) at the wobble position of elongator tRNA(Met), using acetate and ATP as substrates. First activates an acetate ion to form acetyladenylate (Ac-AMP) and then transfers the acetyl group to tRNA to form ac(4)C34. This is tRNA(Met) cytidine acetate ligase from Bacillus anthracis (strain A0248).